The primary structure comprises 452 residues: Cobyrinate a,c-diamide synthase (452 aa).

The 186-residue stretch at 244-429 (RIAVARDRAF…LHLHWGTQAW (186 aa)) folds into the GATase cobBQ-type domain. The active-site Nucleophile is the cysteine 325.

Belongs to the CobB/CbiA family. Requires Mg(2+) as cofactor.

It catalyses the reaction cob(II)yrinate + 2 L-glutamine + 2 ATP + 2 H2O = cob(II)yrinate a,c diamide + 2 L-glutamate + 2 ADP + 2 phosphate + 2 H(+). It participates in cofactor biosynthesis; adenosylcobalamin biosynthesis; cob(II)yrinate a,c-diamide from sirohydrochlorin (anaerobic route): step 10/10. In terms of biological role, catalyzes the ATP-dependent amidation of the two carboxylate groups at positions a and c of cobyrinate, using either L-glutamine or ammonia as the nitrogen source. The chain is Cobyrinate a,c-diamide synthase from Gloeobacter violaceus (strain ATCC 29082 / PCC 7421).